A 1353-amino-acid chain; its full sequence is DNA-directed RNA polymerase subunit beta' (1353 aa).

Residues Met1–Lys117 are unknown. Residues Leu118 to Asn1353 are DNA-directed RNA polymerase subunit beta'. Residues Cys189, Cys191, Cys203, and Cys206 each coordinate Zn(2+). 3 residues coordinate Mg(2+): Asp578, Asp580, and Asp582.

It belongs to the RNA polymerase beta' chain family. The RNAP catalytic core consists of 2 alpha, 1 beta, 1 beta' and 1 omega subunit. When a sigma factor is associated with the core the holoenzyme is formed, which can initiate transcription. Mg(2+) is required as a cofactor. The cofactor is Zn(2+).

It carries out the reaction RNA(n) + a ribonucleoside 5'-triphosphate = RNA(n+1) + diphosphate. Functionally, DNA-dependent RNA polymerase catalyzes the transcription of DNA into RNA using the four ribonucleoside triphosphates as substrates. The sequence is that of DNA-directed RNA polymerase subunit beta' from Onion yellows phytoplasma (strain OY-M).